The primary structure comprises 364 residues: tRNA-specific 2-thiouridylase MnmA 2 (364 aa).

ATP-binding positions include 10–17 and methionine 36; that span reads GMSGGVDS. Cysteine 106 acts as the Nucleophile in catalysis. Cysteine 106 and cysteine 204 form a disulfide bridge. Glycine 130 is an ATP binding site. Positions 154 to 156 are interaction with tRNA; the sequence is KDQ. The active-site Cysteine persulfide intermediate is cysteine 204. The interaction with tRNA stretch occupies residues 310–311; sequence RY.

The protein belongs to the MnmA/TRMU family.

It is found in the cytoplasm. It catalyses the reaction S-sulfanyl-L-cysteinyl-[protein] + uridine(34) in tRNA + AH2 + ATP = 2-thiouridine(34) in tRNA + L-cysteinyl-[protein] + A + AMP + diphosphate + H(+). Catalyzes the 2-thiolation of uridine at the wobble position (U34) of tRNA, leading to the formation of s(2)U34. This chain is tRNA-specific 2-thiouridylase MnmA 2, found in Caldanaerobacter subterraneus subsp. tengcongensis (strain DSM 15242 / JCM 11007 / NBRC 100824 / MB4) (Thermoanaerobacter tengcongensis).